A 92-amino-acid chain; its full sequence is Large ribosomal subunit protein eL43z (92 aa).

Residues 39–60 (CEFCGKYSVKRKVVGIWGCKDC) form a C4-type zinc finger.

The protein belongs to the eukaryotic ribosomal protein eL43 family.

The chain is Large ribosomal subunit protein eL43z (RPL37AB) from Arabidopsis thaliana (Mouse-ear cress).